Here is a 481-residue protein sequence, read N- to C-terminus: Hyaluronidase-4 (481 aa).

At 1–8 the chain is on the cytoplasmic side; that stretch reads MKVLSEGQ. The chain crosses the membrane as a helical span at residues 9–29; sequence LKLCVVQPVHLTSWLLIFFIL. At 30-453 the chain is on the extracellular side; the sequence is KSISCLKPAR…ADCREIKTAD (424 aa). 5 disulfide bridges follow: C59/C351, C223/C237, C376/C387, C381/C435, and C437/C446. N-linked (GlcNAc...) asparagine glycans are attached at residues N86 and N115. E147 acts as the Proton donor in catalysis. N177 carries N-linked (GlcNAc...) (complex) asparagine glycosylation. A glycan (N-linked (GlcNAc...) asparagine) is linked at N343. A helical membrane pass occupies residues 454-474; it reads GCSGVSPSPGSLMTLCLLLLA. Residues 475–481 are Cytoplasmic-facing; sequence SYRSIQL.

It belongs to the glycosyl hydrolase 56 family. As to expression, detected in placenta and skeletal muscle.

It localises to the membrane. It catalyses the reaction Random hydrolysis of (1-&gt;4)-linkages between N-acetyl-beta-D-glucosamine and D-glucuronate residues in hyaluronate.. Its function is as follows. Endo-hyaluronidase that degrades hyaluronan to smaller oligosaccharide fragments. Also has chondroitin sulfate hydrolase activity, The best substrate being the galactosaminidic linkage in the sequence of a trisulfated tetrasaccharide. In Homo sapiens (Human), this protein is Hyaluronidase-4 (HYAL4).